The following is a 483-amino-acid chain: Beta-glucosidase 4 (483 aa).

A beta-D-glucoside-binding positions include Q29, H131, 176-177, Y310, and E380; that span reads NE. E177 acts as the Proton donor in catalysis. Residue E380 is the Nucleophile of the active site. N-linked (GlcNAc...) asparagine glycosylation occurs at N398. Residues W429, 436–437, and F445 contribute to the a beta-D-glucoside site; that span reads EW.

Belongs to the glycosyl hydrolase 1 family.

It catalyses the reaction Hydrolysis of terminal, non-reducing beta-D-glucosyl residues with release of beta-D-glucose.. The protein is Beta-glucosidase 4 (BGLU4) of Oryza sativa subsp. japonica (Rice).